A 275-amino-acid polypeptide reads, in one-letter code: Mitochondrial outer membrane protein porin (275 aa).

Met1 carries the blocked amino end (Met) modification.

This sequence belongs to the eukaryotic mitochondrial porin family. Highly divergent.

It localises to the mitochondrion outer membrane. Functionally, forms a channel of about 1,7 nM through the cell membrane that allows diffusion of small hydrophilic molecules. The channel adopts an open conformation at low or zero membrane potential and a closed conformation at potentials above 20 mv. The open state has a weak anion selectivity whereas the closed state is cation-selective. The chain is Mitochondrial outer membrane protein porin (porA) from Dictyostelium discoideum (Social amoeba).